The primary structure comprises 73 residues: MANNKSSNNNELLVYGAEQAIDQMKYEIASEFGVNLGADTTARANGSVGGEITKRLVQLAEQQLGGGRSKTTL.

Belongs to the alpha/beta-type SASP family.

SASP are bound to spore DNA. They are double-stranded DNA-binding proteins that cause DNA to change to an a-like conformation. They protect the DNA backbone from chemical and enzymatic cleavage and are thus involved in dormant spore's high resistance to UV light. This Priestia megaterium (Bacillus megaterium) protein is Small, acid-soluble spore protein C2 (SASP-C2).